Reading from the N-terminus, the 102-residue chain is ATP-dependent Clp protease adapter protein ClpS (102 aa).

This sequence belongs to the ClpS family. In terms of assembly, binds to the N-terminal domain of the chaperone ClpA.

Involved in the modulation of the specificity of the ClpAP-mediated ATP-dependent protein degradation. This chain is ATP-dependent Clp protease adapter protein ClpS, found in Janthinobacterium sp. (strain Marseille) (Minibacterium massiliensis).